The following is a 208-amino-acid chain: Small ribosomal subunit protein uS5 (208 aa).

Residues 1–19 (MTDSNNQSPNKKTSGSSGA) show a composition bias toward polar residues. The tract at residues 1–54 (MTDSNNQSPNKKTSGSSGAPTAADGRQENRRSRGEKRGGRRDRRGQERDSEWQE) is disordered. Composition is skewed to basic and acidic residues over residues 25–37 (GRQE…GEKR) and 44–54 (RGQERDSEWQE). An S5 DRBM domain is found at 52-115 (WQERVVQIRR…ADGKKHLVRV (64 aa)).

This sequence belongs to the universal ribosomal protein uS5 family. In terms of assembly, part of the 30S ribosomal subunit. Contacts proteins S4 and S8.

Functionally, with S4 and S12 plays an important role in translational accuracy. In terms of biological role, located at the back of the 30S subunit body where it stabilizes the conformation of the head with respect to the body. In Prochlorococcus marinus (strain NATL1A), this protein is Small ribosomal subunit protein uS5.